A 351-amino-acid polypeptide reads, in one-letter code: MTNLIDLTFHELESLIVSLGEPPYRARQVWQWLWQKRCREIAGMTDVSKALRARLEEVAEIRWPVVEMVRESRDGTVKFLLALDDGERVECVLIPEKDHYTACLSTQVGCAMGCGFCATGMLGFRRNMTPGEMLGQVLVGRQYLTDKGVELGLRNLVFMGMGEPLLNYENLLKTLEALHHPQGLDFSGRRITVSTAGVARHLLDLGRTGLCSLAISLHAPTQAQRERIMPGAARLELDKLMDLLAQYPLKPRERLTFEYLLLAGVNDADADARELVRLLSRVKAKVNLIVFNATPGLPYSPPDEARVLAFQDILKSKGLTATLRKSKGSDIAAACGQLRAECDGEGEGEGK.

Residue Glu-90 is the Proton acceptor of the active site. The 235-residue stretch at Glu-96–Asp-330 folds into the Radical SAM core domain. Cys-103 and Cys-335 are oxidised to a cystine. Positions 110, 114, and 117 each coordinate [4Fe-4S] cluster. S-adenosyl-L-methionine is bound by residues Gly-162–Glu-163, Ser-194, Ser-216–His-218, and Asn-292. Cys-335 acts as the S-methylcysteine intermediate in catalysis.

The protein belongs to the radical SAM superfamily. RlmN family. It depends on [4Fe-4S] cluster as a cofactor.

The protein localises to the cytoplasm. It carries out the reaction adenosine(2503) in 23S rRNA + 2 reduced [2Fe-2S]-[ferredoxin] + 2 S-adenosyl-L-methionine = 2-methyladenosine(2503) in 23S rRNA + 5'-deoxyadenosine + L-methionine + 2 oxidized [2Fe-2S]-[ferredoxin] + S-adenosyl-L-homocysteine. The catalysed reaction is adenosine(37) in tRNA + 2 reduced [2Fe-2S]-[ferredoxin] + 2 S-adenosyl-L-methionine = 2-methyladenosine(37) in tRNA + 5'-deoxyadenosine + L-methionine + 2 oxidized [2Fe-2S]-[ferredoxin] + S-adenosyl-L-homocysteine. In terms of biological role, specifically methylates position 2 of adenine 2503 in 23S rRNA and position 2 of adenine 37 in tRNAs. m2A2503 modification seems to play a crucial role in the proofreading step occurring at the peptidyl transferase center and thus would serve to optimize ribosomal fidelity. This chain is Dual-specificity RNA methyltransferase RlmN, found in Solidesulfovibrio magneticus (strain ATCC 700980 / DSM 13731 / RS-1) (Desulfovibrio magneticus).